The chain runs to 361 residues: 3-isopropylmalate dehydrogenase (361 aa).

78–91 (GTQWDSLPRHLRPE) is a binding site for NAD(+). Positions 98, 108, 136, and 226 each coordinate substrate. Mg(2+) contacts are provided by Asp226, Asp250, and Asp254. 284–296 (GSAPDIAGQDKAN) is a binding site for NAD(+).

It belongs to the isocitrate and isopropylmalate dehydrogenases family. LeuB type 1 subfamily. As to quaternary structure, homodimer. It depends on Mg(2+) as a cofactor. Mn(2+) is required as a cofactor.

It is found in the cytoplasm. The enzyme catalyses (2R,3S)-3-isopropylmalate + NAD(+) = 4-methyl-2-oxopentanoate + CO2 + NADH. Its pathway is amino-acid biosynthesis; L-leucine biosynthesis; L-leucine from 3-methyl-2-oxobutanoate: step 3/4. Its function is as follows. Catalyzes the oxidation of 3-carboxy-2-hydroxy-4-methylpentanoate (3-isopropylmalate) to 3-carboxy-4-methyl-2-oxopentanoate. The product decarboxylates to 4-methyl-2 oxopentanoate. This Thermosynechococcus vestitus (strain NIES-2133 / IAM M-273 / BP-1) protein is 3-isopropylmalate dehydrogenase.